The chain runs to 231 residues: LexA repressor (231 aa).

The H-T-H motif DNA-binding region spans 26–46; that stretch reads FDEMKLALDLRSKSGIHRLIT. A disordered region spans residues 79–98; that stretch reads VGFQPRVIDGDRPDRPRPAN. Positions 86-95 are enriched in basic and acidic residues; that stretch reads IDGDRPDRPR. Residues Ser152 and Lys190 each act as for autocatalytic cleavage activity in the active site.

Belongs to the peptidase S24 family. As to quaternary structure, homodimer.

The catalysed reaction is Hydrolysis of Ala-|-Gly bond in repressor LexA.. Represses a number of genes involved in the response to DNA damage (SOS response), including recA and lexA. In the presence of single-stranded DNA, RecA interacts with LexA causing an autocatalytic cleavage which disrupts the DNA-binding part of LexA, leading to derepression of the SOS regulon and eventually DNA repair. The protein is LexA repressor of Ruegeria pomeroyi (strain ATCC 700808 / DSM 15171 / DSS-3) (Silicibacter pomeroyi).